We begin with the raw amino-acid sequence, 300 residues long: N-carbamoylputrescine amidase (300 aa).

In terms of domain architecture, CN hydrolase spans 8–266 (VTVAALQFAC…EAVLVAQFDL (259 aa)). E47 functions as the Proton acceptor in the catalytic mechanism. Catalysis depends on K120, which acts as the Proton donor. The active-site Nucleophile is C157.

The protein belongs to the carbon-nitrogen hydrolase superfamily. In terms of assembly, homooctamer.

It carries out the reaction N-carbamoylputrescine + H2O + 2 H(+) = putrescine + NH4(+) + CO2. The protein operates within amine and polyamine biosynthesis; putrescine biosynthesis via agmatine pathway; putrescine from N-carbamoylputrescine (amidase route): step 1/1. Its function is as follows. Involved in polyamine biosynthesis. The sequence is that of N-carbamoylputrescine amidase (CPA) from Solanum tuberosum (Potato).